We begin with the raw amino-acid sequence, 326 residues long: Ornithine carbamoyltransferase (326 aa).

Residues S54 to T57, Q81, R105, and H132 to Q135 contribute to the carbamoyl phosphate site. Residues N164, D225, and S229–M230 each bind L-ornithine. Residues C266–L267 and R311 contribute to the carbamoyl phosphate site.

This sequence belongs to the aspartate/ornithine carbamoyltransferase superfamily. OTCase family.

The protein resides in the cytoplasm. The catalysed reaction is carbamoyl phosphate + L-ornithine = L-citrulline + phosphate + H(+). The protein operates within amino-acid biosynthesis; L-arginine biosynthesis; L-arginine from L-ornithine and carbamoyl phosphate: step 1/3. Reversibly catalyzes the transfer of the carbamoyl group from carbamoyl phosphate (CP) to the N(epsilon) atom of ornithine (ORN) to produce L-citrulline. This chain is Ornithine carbamoyltransferase (argF), found in Streptococcus mutans serotype c (strain ATCC 700610 / UA159).